Here is a 39-residue protein sequence, read N- to C-terminus: Contryphan-Cal4 (39 aa).

The N-terminal stretch at 1–20 (MTRTAVLLLTLLFLVAMAAS) is a signal peptide. Cys29 and Cys35 are joined by a disulfide.

Expressed by the venom duct.

Its subcellular location is the secreted. Its function is as follows. Probable neurotoxin. The sequence is that of Contryphan-Cal4 from Californiconus californicus (California cone).